The chain runs to 272 residues: Glutamate 5-kinase (272 aa).

Position 15 (Lys15) interacts with ATP. The substrate site is built by Ser55, Asp142, and Asn158. Residues 178-179 (SD) and 220-226 (TGGMLSK) contribute to the ATP site.

The protein belongs to the glutamate 5-kinase family.

The protein resides in the cytoplasm. The catalysed reaction is L-glutamate + ATP = L-glutamyl 5-phosphate + ADP. The protein operates within amino-acid biosynthesis; L-proline biosynthesis; L-glutamate 5-semialdehyde from L-glutamate: step 1/2. Its function is as follows. Catalyzes the transfer of a phosphate group to glutamate to form L-glutamate 5-phosphate. The protein is Glutamate 5-kinase of Streptococcus equi subsp. zooepidemicus (strain H70).